The following is a 37-amino-acid chain: Large ribosomal subunit protein bL36 (37 aa).

The protein belongs to the bacterial ribosomal protein bL36 family.

This chain is Large ribosomal subunit protein bL36, found in Helicobacter pylori (strain HPAG1).